Reading from the N-terminus, the 601-residue chain is NADH-ubiquinone oxidoreductase chain 5 (601 aa).

A run of 17 helical transmembrane segments spans residues 5–25 (ITSL…TLSF), 37–54 (YMRN…IYID), 83–105 (YCLT…SLWY), 112–129 (TLFF…LFFL), 134–156 (LLQL…NWWH), 169–189 (IIYN…SALF), 209–231 (WLPL…LHPW), 240–260 (TPVS…FLLI), 271–291 (MIIS…ALCA), 300–320 (IIAF…GINQ), 323–343 (LAFL…LCSA), 363–383 (LILP…MGMP), 400–420 (MSYV…LTSI), 451–471 (PLIR…TFFL), 478–498 (FSIP…VSSL), 508–528 (FSHM…AIFH), and 581–601 (NYIT…ALYF).

This sequence belongs to the complex I subunit 5 family.

It is found in the mitochondrion inner membrane. The catalysed reaction is a ubiquinone + NADH + 5 H(+)(in) = a ubiquinol + NAD(+) + 4 H(+)(out). Functionally, core subunit of the mitochondrial membrane respiratory chain NADH dehydrogenase (Complex I) that is believed to belong to the minimal assembly required for catalysis. Complex I functions in the transfer of electrons from NADH to the respiratory chain. The immediate electron acceptor for the enzyme is believed to be ubiquinone. This Myxine glutinosa (Atlantic hagfish) protein is NADH-ubiquinone oxidoreductase chain 5 (MT-ND5).